The following is a 142-amino-acid chain: Translation initiation factor 2 subunit beta (142 aa).

It belongs to the eIF-2-beta/eIF-5 family. As to quaternary structure, heterotrimer composed of an alpha, a beta and a gamma chain.

In terms of biological role, eIF-2 functions in the early steps of protein synthesis by forming a ternary complex with GTP and initiator tRNA. In Thermococcus kodakarensis (strain ATCC BAA-918 / JCM 12380 / KOD1) (Pyrococcus kodakaraensis (strain KOD1)), this protein is Translation initiation factor 2 subunit beta.